An 84-amino-acid polypeptide reads, in one-letter code: MSQSETFEKVKKIVIEQLSVENPDTVTPEASFANDLQADSLDTVELVMALEEEFDIEIPDEAAEKITTVQEAVDYINNQVAASA.

The Carrier domain maps to 4–80 (SETFEKVKKI…EAVDYINNQV (77 aa)). At S40 the chain carries O-(pantetheine 4'-phosphoryl)serine.

It belongs to the acyl carrier protein (ACP) family. 4'-phosphopantetheine is transferred from CoA to a specific serine of apo-ACP by AcpS. This modification is essential for activity because fatty acids are bound in thioester linkage to the sulfhydryl of the prosthetic group.

Its subcellular location is the cytoplasm. Its pathway is lipid metabolism; fatty acid biosynthesis. Its function is as follows. Carrier of the growing fatty acid chain in fatty acid biosynthesis. This is Acyl carrier protein from Nostoc sp. (strain PCC 7120 / SAG 25.82 / UTEX 2576).